The chain runs to 341 residues: uncharacterized protein (341 aa).

The protein belongs to the cycloisomerase 2 family.

This is an uncharacterized protein from Lactococcus lactis subsp. lactis (strain IL1403) (Streptococcus lactis).